A 115-amino-acid polypeptide reads, in one-letter code: Large ribosomal subunit protein bL20c (115 aa).

This sequence belongs to the bacterial ribosomal protein bL20 family.

The protein resides in the plastid. The protein localises to the chloroplast. Functionally, binds directly to 23S ribosomal RNA and is necessary for the in vitro assembly process of the 50S ribosomal subunit. It is not involved in the protein synthesizing functions of that subunit. This is Large ribosomal subunit protein bL20c from Pleurastrum terricola (Filamentous green alga).